We begin with the raw amino-acid sequence, 379 residues long: Spermatogenesis-associated protein 17 (379 aa).

IQ domains follow at residues Glu-48–Ile-77, Leu-71–Tyr-100, and Tyr-107–Tyr-136.

In terms of tissue distribution, strongly expressed in adult testis but weakly expressed in the spleen and thymus. Strongly expressed in round and elongating spermatids, and weakly or not expressed in spermatozoa.

Its subcellular location is the cytoplasm. The protein is Spermatogenesis-associated protein 17 (Spata17) of Mus musculus (Mouse).